A 517-amino-acid polypeptide reads, in one-letter code: Nectin-1 (517 aa).

An N-terminal signal peptide occupies residues 1–30 (MARMGLAGAAGRWWGLALGLTAFFLPGVHS). The region spanning 31-141 (QVVQVNDSMY…GNRESQLNLT (111 aa)) is the Ig-like V-type domain. The Extracellular portion of the chain corresponds to 31 to 355 (QVVQVNDSMY…GRRAGPVPTA (325 aa)). N-linked (GlcNAc...) asparagine glycosylation is found at asparagine 36, asparagine 72, and asparagine 139. A disulfide bridge connects residues cysteine 51 and cysteine 124. Ig-like C2-type domains follow at residues 149–238 (WIEG…FKES) and 247–334 (PEVT…VNIT). Disulfide bonds link cysteine 172–cysteine 226 and cysteine 269–cysteine 316. Residue asparagine 202 is glycosylated (N-linked (GlcNAc...) (complex) asparagine). Residues 282–299 (WTTLNGSLPKGVEAQNRT) are interaction with FGFR. N-linked (GlcNAc...) asparagine glycosylation is found at asparagine 286, asparagine 297, asparagine 307, and asparagine 332. The helical transmembrane segment at 356 to 376 (IIGGVAGSILLVLIVVGGIVV) threads the bilayer. Residues 377-517 (ALRRRRHTFK…SFISKKEWYV (141 aa)) lie on the Cytoplasmic side of the membrane. A disordered region spans residues 399-488 (GYSKAGIPQH…DGYGDRTLGY (90 aa)). A phosphoserine mark is found at serine 422, serine 434, and serine 435. A Phosphotyrosine modification is found at tyrosine 436. Acidic residues predominate over residues 436-445 (YEEEEEEEEG). Positions 449 to 466 (GERKVGGPHPKYDEDAKR) are enriched in basic and acidic residues. Phosphoserine is present on serine 511.

It belongs to the nectin family. In terms of assembly, cis- and trans-homodimer. Can form trans-heterodimers with NECTIN3 and with NECTIN4. Interaction between NECTIN1 and NECTIN3 on the pre- and postsynaptic sites, respectively, initiates the formation of puncta adherentia junctions between axons and dendrites. Interacts (via cytoplasmic domain) with AFDN (via PDZ domain); this interaction recruits NECTIN1 to cadherin-based adherens junctions and provides a connection with the actin cytoskeleton. Interacts with integrin alphaV/beta3. Interacts (via Ig-like C2-type domain 2) with FGFR1, FGFR2 and FGFR3. As to quaternary structure, (Microbial infection) Interacts with herpes simplex virus 1/HHV-1, herpes simplex virus 2/HHV-2, and pseudorabies virus/PRV envelope glycoprotein D. (Microbial infection) Ubiquitinated by CBL following infection by herpes simplex virus 1/HHV-1 and association with HHV-1 envelope glycoprotein D, leading to its removal from cell surface.

It is found in the cell membrane. The protein resides in the cell junction. Its subcellular location is the adherens junction. It localises to the presynaptic cell membrane. The protein localises to the secreted. In terms of biological role, cell adhesion molecule that promotes cell-cell contacts and plays important roles in the development of the nervous system. Acts by forming homophilic or heterophilic trans-dimers. Heterophilic interactions have been detected between NECTIN1 and NECTIN3 and between NECTIN1 and NECTIN4. Involved in axon guidance by promoting contacts between the commissural axons and the floor plate cells. Involved in synaptogegesis. Has some neurite outgrowth-promoting activity. Promotes formation of checkerboard-like cellular pattern of hair cells and supporting cells in the auditory epithelium via heterophilic interaction with NECTIN3: NECTIN1 is present in the membrane of hair cells and associates with NECTIN3 on supporting cells, thereby mediating heterotypic adhesion between these two cell types. Required for enamel mineralization. (Microbial infection) Acts as a receptor for herpes simplex virus 1/HHV-1, herpes simplex virus 2/HHV-2, and pseudorabies virus/PRV. Constitutes the major receptor for herpes simplex virus 1/HHV-1 entry into host cells. The polypeptide is Nectin-1 (Homo sapiens (Human)).